The following is a 545-amino-acid chain: CTP synthase (545 aa).

Positions 1–265 (MSKYIFVTGG…LVPIAKQLDL (265 aa)) are amidoligase domain. Ser-13 is a CTP binding site. Residue Ser-13 coordinates UTP. ATP contacts are provided by residues 14 to 19 (SLGKGI) and Asp-71. Asp-71 and Glu-139 together coordinate Mg(2+). CTP-binding positions include 146 to 148 (DIE), 186 to 191 (KTKPTQ), and Lys-222. UTP is bound by residues 186 to 191 (KTKPTQ) and Lys-222. The Glutamine amidotransferase type-1 domain occupies 290-544 (KIAFVGKYLQ…VENAYKCQRS (255 aa)). Gly-355 contacts L-glutamine. Cys-382 acts as the Nucleophile; for glutamine hydrolysis in catalysis. L-glutamine-binding positions include 383–386 (LGMQ), Glu-406, and Arg-473. Catalysis depends on residues His-517 and Glu-519.

The protein belongs to the CTP synthase family. As to quaternary structure, homotetramer.

It catalyses the reaction UTP + L-glutamine + ATP + H2O = CTP + L-glutamate + ADP + phosphate + 2 H(+). The catalysed reaction is L-glutamine + H2O = L-glutamate + NH4(+). The enzyme catalyses UTP + NH4(+) + ATP = CTP + ADP + phosphate + 2 H(+). Its pathway is pyrimidine metabolism; CTP biosynthesis via de novo pathway; CTP from UDP: step 2/2. With respect to regulation, allosterically activated by GTP, when glutamine is the substrate; GTP has no effect on the reaction when ammonia is the substrate. The allosteric effector GTP functions by stabilizing the protein conformation that binds the tetrahedral intermediate(s) formed during glutamine hydrolysis. Inhibited by the product CTP, via allosteric rather than competitive inhibition. In terms of biological role, catalyzes the ATP-dependent amination of UTP to CTP with either L-glutamine or ammonia as the source of nitrogen. Regulates intracellular CTP levels through interactions with the four ribonucleotide triphosphates. In Nautilia profundicola (strain ATCC BAA-1463 / DSM 18972 / AmH), this protein is CTP synthase.